We begin with the raw amino-acid sequence, 557 residues long: Membrane protein insertase YidC (557 aa).

A helical membrane pass occupies residues 3–23 (NLRPVLYLSMLLVLFLIWQAW). Residues 34–60 (APGAQEQVMDRDGVPAPPQDVPDAPVS) are disordered. 4 helical membrane-spanning segments follow: residues 366–386 (VVGN…LVFY), 436–456 (LGGC…YWVL), 480–500 (YFIL…LNPA), and 514–534 (PFVF…YWFV).

This sequence belongs to the OXA1/ALB3/YidC family. Type 1 subfamily. In terms of assembly, interacts with the Sec translocase complex via SecD. Specifically interacts with transmembrane segments of nascent integral membrane proteins during membrane integration.

It localises to the cell inner membrane. Its function is as follows. Required for the insertion and/or proper folding and/or complex formation of integral membrane proteins into the membrane. Involved in integration of membrane proteins that insert both dependently and independently of the Sec translocase complex, as well as at least some lipoproteins. Aids folding of multispanning membrane proteins. The polypeptide is Membrane protein insertase YidC (Thioalkalivibrio sulfidiphilus (strain HL-EbGR7)).